The primary structure comprises 122 residues: MVQMQTYLTVADNTGGKIAECIKVLGGSKKRSARVGDIIVIAVKQAIPNSPIKKGEVHKAVVVRTSKEIRRKNGTYVRFDDNACVILDANLNPRGKRVFGPVARELRDANFMKVVSLASEVI.

The protein belongs to the universal ribosomal protein uL14 family. In terms of assembly, part of the 50S ribosomal subunit. Forms a cluster with proteins L3 and L19. In the 70S ribosome, L14 and L19 interact and together make contacts with the 16S rRNA in bridges B5 and B8.

Functionally, binds to 23S rRNA. Forms part of two intersubunit bridges in the 70S ribosome. In Borrelia turicatae (strain 91E135), this protein is Large ribosomal subunit protein uL14.